Consider the following 563-residue polypeptide: Cystathionine gamma-synthase 1, chloroplastic (563 aa).

The transit peptide at 1–68 (MAVSSFQCPT…SRILRFPPNF (68 aa)) directs the protein to the chloroplast. Pyridoxal 5'-phosphate contacts are provided by tyrosine 226, arginine 228, glycine 256, methionine 257, tyrosine 281, serine 376, and threonine 378. Lysine 379 is modified (N6-(pyridoxal phosphate)lysine).

The protein belongs to the trans-sulfuration enzymes family. Pyridoxal 5'-phosphate serves as cofactor.

It localises to the plastid. It is found in the chloroplast. It catalyses the reaction O-phospho-L-homoserine + L-cysteine = L,L-cystathionine + phosphate. The enzyme catalyses O-succinyl-L-homoserine + L-cysteine = L,L-cystathionine + succinate + H(+). The protein operates within amino-acid biosynthesis; L-methionine biosynthesis via de novo pathway; L-cystathionine from O-succinyl-L-homoserine: step 1/1. Inhibited by propargylglycine. Catalyzes the first committed step of methionine (Met) biosynthesis. Catalyzes the formation of L-cystathionine from homoserine esters and L-cysteine, via a gamma-replacement reaction. Substrate preference for cystathionine synthesis is O-phospho-L-homoserine (OPH) &gt; O(4)-succinyl-L-homoserine (OSH) &gt;&gt; O-acetyl-L-homoserine (OAH). Is able, at extremely low rate, to catalyze a gamma-elimination of OPH in the absence of cysteine to produce inorganic phosphate (Pi), 2-oxobutanoate and ammonia. In Arabidopsis thaliana (Mouse-ear cress), this protein is Cystathionine gamma-synthase 1, chloroplastic.